The chain runs to 296 residues: mRNA export factor rsm1 (296 aa).

A C3HC-type zinc finger spans residues 40–174; that stretch reads PWSREEFLRR…VSTHLPEEMT (135 aa).

The protein localises to the cytoplasm. Its subcellular location is the nucleus. In terms of biological role, involved in the export of mRNA from the nucleus to the cytoplasm. In Schizosaccharomyces pombe (strain 972 / ATCC 24843) (Fission yeast), this protein is mRNA export factor rsm1 (rsm1).